The primary structure comprises 241 residues: MDGFTDSQAPPAYEEVKWLADTLVAFMGIGWLINYGAMIRHSYQGRTYCMGIIPLCNNIGWELVYTLVHPSSNRVELAVFAAGVTLNVIIMFAATRSAKTEWQHSPLVANHTPLIFLGGTFVCFAGHVALAAEIGPALAYSWGAVICQLVLSIGGVCQLLQRNTTRGTSVTLWLSRFLGSCCTVGFAFLRWRYWPEAFAWLAGPLVLWSLATFVLADITYGVCLYLISQTETSSTKRSKLK.

5 helical membrane-spanning segments follow: residues 19-39 (LADT…GAMI), 48-68 (YCMG…YTLV), 75-95 (VELA…FAAT), 114-134 (LIFL…AAEI), and 137-157 (ALAY…GGVC). The N-linked (GlcNAc...) asparagine glycan is linked to asparagine 163. 2 consecutive transmembrane segments (helical) span residues 169 to 189 (SVTL…FAFL) and 198 to 218 (FAWL…LADI).

Belongs to the paxB family.

Its subcellular location is the membrane. It participates in secondary metabolite biosynthesis. Terpene cyclase; part of the gene cluster that mediates the biosynthesis of terpendoles, indole-diterpene (IDT) mycotoxins including terpendole I, terpendole K, terpendole C, as well as the kinesin Eg5 inhibitor terpendole E. Terpendoles biosynthesis begins with the synthesis of geranylgeranyl diphosphate (GGPP) by a yet unidentified GGPP synthase. Condensation of indole-3-glycerol phosphate with GGPP by the prenyltransferase terC then forms 3-geranylgeranylindole (3-GGI), followed by epoxidation and cyclization of this intermediate (by the FAD-dependent monooxygeanse terM and the terpene cyclase terB) to form paspaline. The cytochrome monooxygenase terQ then hydroxylates paspalline at C-11 to yield terpendole E. The cytochrome monooxygenase terP converts terpendole E to 13-desoxyterpendole I, and terQ converts 13-desoxyterpendole I into terpendole I. TerF and terK are required for conversion of terpendole I to terpendole C which is further converted to terpendole K. This chain is Terpene cyclase terB, found in Tolypocladium album (Soil fungus).